The chain runs to 583 residues: Capsid vertex component 2 (583 aa).

The segment at methionine 1–glutamate 49 is interaction with major capsid protein/MCP.

The protein belongs to the herpesviridae CVC2 protein family. As to quaternary structure, heterodimerizes with CVC1. Interacts with major capsid protein/MCP and triplex capsid protein 1/TRX1 at the pentamer vertices. Interacts with the large tegument protein/LTP.

It is found in the virion. The protein localises to the host nucleus. In terms of biological role, capsid vertex-specific component that plays a role during viral DNA encapsidation, assuring correct genome cleavage and presumably stabilizing capsids that contain full-length viral genomes. Participates in the interaction between the capsid and the tegument through interaction with the large tegument protein/LTP. This Gallus gallus (Chicken) protein is Capsid vertex component 2.